The sequence spans 219 residues: Orotate phosphoribosyltransferase (219 aa).

Lys-26 is a binding site for 5-phospho-alpha-D-ribose 1-diphosphate. Orotate is bound at residue 34–35 (FF). 5-phospho-alpha-D-ribose 1-diphosphate-binding positions include 72–73 (YK), Arg-98, Lys-99, Lys-102, His-104, and 124–132 (DDVITAGTA). 2 residues coordinate orotate: Thr-128 and Arg-156.

It belongs to the purine/pyrimidine phosphoribosyltransferase family. PyrE subfamily. As to quaternary structure, homodimer. The cofactor is Mg(2+).

It catalyses the reaction orotidine 5'-phosphate + diphosphate = orotate + 5-phospho-alpha-D-ribose 1-diphosphate. Its pathway is pyrimidine metabolism; UMP biosynthesis via de novo pathway; UMP from orotate: step 1/2. In terms of biological role, catalyzes the transfer of a ribosyl phosphate group from 5-phosphoribose 1-diphosphate to orotate, leading to the formation of orotidine monophosphate (OMP). The sequence is that of Orotate phosphoribosyltransferase from Xanthomonas axonopodis pv. citri (strain 306).